We begin with the raw amino-acid sequence, 624 residues long: UvrABC system protein C (624 aa).

Positions leucine 27–isoleucine 105 constitute a GIY-YIG domain. Residues arginine 215 to isoleucine 250 form the UVR domain.

The protein belongs to the UvrC family. As to quaternary structure, interacts with UvrB in an incision complex.

It localises to the cytoplasm. Its function is as follows. The UvrABC repair system catalyzes the recognition and processing of DNA lesions. UvrC both incises the 5' and 3' sides of the lesion. The N-terminal half is responsible for the 3' incision and the C-terminal half is responsible for the 5' incision. The chain is UvrABC system protein C from Paramagnetospirillum magneticum (strain ATCC 700264 / AMB-1) (Magnetospirillum magneticum).